The following is a 309-amino-acid chain: Elongation factor Ts (309 aa).

The segment at 82–85 (TDFV) is involved in Mg(2+) ion dislocation from EF-Tu.

Belongs to the EF-Ts family.

It is found in the cytoplasm. In terms of biological role, associates with the EF-Tu.GDP complex and induces the exchange of GDP to GTP. It remains bound to the aminoacyl-tRNA.EF-Tu.GTP complex up to the GTP hydrolysis stage on the ribosome. The protein is Elongation factor Ts of Rickettsia bellii (strain OSU 85-389).